A 483-amino-acid chain; its full sequence is Shaker-related potassium channel tsha2 (483 aa).

Topologically, residues 1-165 (MTVVSCEIQD…YPESSGPARM (165 aa)) are cytoplasmic. Residues 166–186 (IAVVSVSVIVISIVIFCLETL) form a helical membrane-spanning segment. The Extracellular portion of the chain corresponds to 187-220 (PQFREDTSANLPLSNHHTTNGTTLHKKPNLFTDP). Residues 221-241 (FFMVETLCIVWFSFEFLVRFL) traverse the membrane as a helical segment. Topologically, residues 242-252 (SCPSKPAFFKN) are cytoplasmic. The S-palmitoyl cysteine moiety is linked to residue cysteine 243. A helical membrane pass occupies residues 253 to 273 (AMNSIDILAIAPYFITLGLEL). Residues 274 to 324 (AEQQEAGSEQAMSLAILRVIRLVRVFRIFKLSRHSKGLQILGQTLHASISE) are Extracellular-facing. The chain crosses the membrane as a helical; Voltage-sensor span at residues 325 to 345 (LGLLIFFLLIGVILFSSAVYF). Residues 346–353 (AEADDPES) lie on the Cytoplasmic side of the membrane. A helical membrane pass occupies residues 354–374 (GFSSIPAAFWWAVVSMTTVGY). Positions 371–376 (TVGYGD) match the Selectivity filter motif. At 375–385 (GDMCPVTIGGK) the chain is on the extracellular side. Residues 386–406 (IVGSMCAIAGVLTIALPVPVI) traverse the membrane as a helical segment. Topologically, residues 407–483 (VSNFNYFYHR…EHYTGKLTDV (77 aa)) are cytoplasmic. Position 426 is a phosphotyrosine (tyrosine 426). Phosphothreonine is present on threonine 430. The segment covering 440–452 (EFKSTSDSRQSLT) has biased composition (polar residues). The disordered stretch occupies residues 440–459 (EFKSTSDSRQSLTKSEDTEE). The PDZ-binding motif lies at 481–483 (TDV).

It belongs to the potassium channel family. A (Shaker) (TC 1.A.1.2) subfamily. Heterotetramer of potassium channel proteins. Binds PDZ domains of dlg1, dlg2 and dlg4. Expressed in oligodendrocytes and astrocytes.

The protein resides in the membrane. Its function is as follows. Mediates the voltage-dependent potassium ion permeability of excitable membranes. Assuming opened or closed conformations in response to the voltage difference across the membrane, the protein forms a potassium-selective channel through which potassium ions may pass in accordance with their electrochemical gradient. In Oncorhynchus mykiss (Rainbow trout), this protein is Shaker-related potassium channel tsha2.